Consider the following 25-residue polypeptide: Grammistin Pp 3 (25 aa).

It belongs to the grammistin family. Group 3 subfamily. Exists as aggregates of 3-4 molecules. In terms of tissue distribution, expressed by the skin glands.

It localises to the secreted. Functionally, thanks to its abundant amphiphilic alpha-helices, it may integrate into membrane phospholipids, leading to lysis of the membrane. Has hemolytic activity. Has antibacterial activity with a broad spectrum against various species of bacteria including both Gram-positive and Gram-negative groups. Also has ichthyotoxic activity. In Pogonoperca punctata (Clown grouper), this protein is Grammistin Pp 3.